The sequence spans 321 residues: Ornithine carbamoyltransferase (321 aa).

Residues 53–56 (STRT), glutamine 80, arginine 104, and 131–134 (HPCQ) contribute to the carbamoyl phosphate site. Residues asparagine 166, aspartate 230, and 234–235 (SM) each bind L-ornithine. Carbamoyl phosphate contacts are provided by residues 270 to 271 (CL) and arginine 298.

The protein belongs to the aspartate/ornithine carbamoyltransferase superfamily. OTCase family.

Its subcellular location is the cytoplasm. It catalyses the reaction carbamoyl phosphate + L-ornithine = L-citrulline + phosphate + H(+). The protein operates within amino-acid biosynthesis; L-arginine biosynthesis; L-arginine from L-ornithine and carbamoyl phosphate: step 1/3. Functionally, reversibly catalyzes the transfer of the carbamoyl group from carbamoyl phosphate (CP) to the N(epsilon) atom of ornithine (ORN) to produce L-citrulline. This Bifidobacterium longum (strain NCC 2705) protein is Ornithine carbamoyltransferase.